Here is a 178-residue protein sequence, read N- to C-terminus: Alkyl hydroperoxide reductase AhpD (178 aa).

The Proton donor role is filled by Cys-130. Cys-130 and Cys-133 are joined by a disulfide. Residue Cys-133 is the Cysteine sulfenic acid (-SOH) intermediate of the active site.

This sequence belongs to the AhpD family. As to quaternary structure, homotrimer.

It catalyses the reaction N(6)-[(R)-dihydrolipoyl]-L-lysyl-[lipoyl-carrier protein] + a hydroperoxide = N(6)-[(R)-lipoyl]-L-lysyl-[lipoyl-carrier protein] + an alcohol + H2O. Antioxidant protein with alkyl hydroperoxidase activity. Required for the reduction of the AhpC active site cysteine residues and for the regeneration of the AhpC enzyme activity. This chain is Alkyl hydroperoxide reductase AhpD, found in Mycobacterium marinum (strain ATCC BAA-535 / M).